Reading from the N-terminus, the 223-residue chain is Pleckstrin homology domain-containing family B member 1 (223 aa).

In terms of domain architecture, PH spans 2–109; it reads ALVRGGWLWR…WKTALMEANS (108 aa).

As to quaternary structure, homodimer. Interacts (via PH domain) with MYO1C. Interacts (via PH domain) with MYO7A. Binds transducins. Highly expressed in photoreceptor cells, oligodendrocytes and throughout the myelinated parts of the central nervous system. Detected in brain, liver, kidney, spleen and trachea.

It localises to the membrane. It is found in the cytoplasm. This Rattus norvegicus (Rat) protein is Pleckstrin homology domain-containing family B member 1 (Plekhb1).